Reading from the N-terminus, the 215-residue chain is Ras-related protein Rab-5B (215 aa).

GTP contacts are provided by S29, A30, G32, K33, S34, S35, H46, E47, T52, G78, N133, K134, D136, A164, and K165. S34 contributes to the Mg(2+) binding site. 2 consecutive short sequence motifs (switch) follow at residues 44–56 (QFHEYQESTIGAA) and 77–93 (AGQERYHSLAPMYYRGA). T52 contributes to the Mg(2+) binding site. A disordered region spans residues 184-215 (SEPQSTSGAAGRSRGVDLHEQTQQNKSQCCSN). Residues 204–215 (QTQQNKSQCCSN) show a composition bias toward polar residues. S-geranylgeranyl cysteine attachment occurs at residues C212 and C213.

The protein belongs to the small GTPase superfamily. Rab family. Requires Mg(2+) as cofactor.

It localises to the cell membrane. The protein resides in the early endosome membrane. It catalyses the reaction GTP + H2O = GDP + phosphate + H(+). Its activity is regulated as follows. Regulated by guanine nucleotide exchange factors (GEFs) which promote the exchange of bound GDP for free GTP. Regulated by GTPase activating proteins (GAPs) which increase the GTP hydrolysis activity. Inhibited by GDP dissociation inhibitors (GDIs). The small GTPases Rab are key regulators of intracellular membrane trafficking, from the formation of transport vesicles to their fusion with membranes. Rabs cycle between an inactive GDP-bound form and an active GTP-bound form that is able to recruit to membranes different sets of downstream effectors directly responsible for vesicle formation, movement, tethering and fusion. This is Ras-related protein Rab-5B (RAB5B) from Gallus gallus (Chicken).